Reading from the N-terminus, the 156-residue chain is Small ribosomal subunit protein uS7 (156 aa).

The protein belongs to the universal ribosomal protein uS7 family. In terms of assembly, part of the 30S ribosomal subunit. Contacts proteins S9 and S11.

Functionally, one of the primary rRNA binding proteins, it binds directly to 16S rRNA where it nucleates assembly of the head domain of the 30S subunit. Is located at the subunit interface close to the decoding center, probably blocks exit of the E-site tRNA. The chain is Small ribosomal subunit protein uS7 from Leuconostoc mesenteroides subsp. mesenteroides (strain ATCC 8293 / DSM 20343 / BCRC 11652 / CCM 1803 / JCM 6124 / NCDO 523 / NBRC 100496 / NCIMB 8023 / NCTC 12954 / NRRL B-1118 / 37Y).